The following is a 312-amino-acid chain: Golgi to ER traffic protein 2 (312 aa).

Topologically, residues 1 to 175 (MSDSPSISAE…VQYNTYRHQV (175 aa)) are cytoplasmic. Residues 176 to 196 (WKFRFLAVRYFALLANFIYHF) traverse the membrane as a helical segment. At 197–224 (YIIGDSISFASSSHQFIRELIPVEPARS) the chain is on the lumenal side. A helical membrane pass occupies residues 225 to 244 (FFTLFSTIEVVIIASYYFLG). The Cytoplasmic portion of the chain corresponds to 245–288 (TKEGFFSTATSNNFVVKLLDMGSMVLPQLQQFKTIAVRLLGYYE). Residues 289 to 309 (LLAVLLGDLSLVVVLFGLHSV) traverse the membrane as a helical segment. Topologically, residues 310–312 (LGN) are lumenal.

The protein belongs to the GET2 family. In terms of assembly, component of the Golgi to ER traffic (GET) complex, which is composed of GET1, GET2 and GET3. Within the complex, GET1 and GET2 form a heterotetramer which is stabilized by phosphatidylinositol binding and which binds to the GET3 homodimer.

The protein resides in the endoplasmic reticulum membrane. The protein localises to the golgi apparatus membrane. Its function is as follows. Required for the post-translational delivery of tail-anchored (TA) proteins to the endoplasmic reticulum. Together with GET1, acts as a membrane receptor for soluble GET3, which recognizes and selectively binds the transmembrane domain of TA proteins in the cytosol. The GET complex cooperates with the HDEL receptor ERD2 to mediate the ATP-dependent retrieval of resident ER proteins that contain a C-terminal H-D-E-L retention signal from the Golgi to the ER. This chain is Golgi to ER traffic protein 2, found in Scheffersomyces stipitis (strain ATCC 58785 / CBS 6054 / NBRC 10063 / NRRL Y-11545) (Yeast).